Reading from the N-terminus, the 377-residue chain is Glutamate 5-kinase (377 aa).

Position 21 (lysine 21) interacts with ATP. Substrate is bound by residues serine 61, aspartate 149, and asparagine 161. ATP contacts are provided by residues 181–182 (SD) and 223–229 (SGGMTSK). Residues 286 to 363 (RGSVQVDAGA…REHEELLGYA (78 aa)) form the PUA domain.

Belongs to the glutamate 5-kinase family.

It is found in the cytoplasm. The catalysed reaction is L-glutamate + ATP = L-glutamyl 5-phosphate + ADP. The protein operates within amino-acid biosynthesis; L-proline biosynthesis; L-glutamate 5-semialdehyde from L-glutamate: step 1/2. In terms of biological role, catalyzes the transfer of a phosphate group to glutamate to form L-glutamate 5-phosphate. The protein is Glutamate 5-kinase of Novosphingobium aromaticivorans (strain ATCC 700278 / DSM 12444 / CCUG 56034 / CIP 105152 / NBRC 16084 / F199).